The following is a 157-amino-acid chain: Protein Smg (157 aa).

This sequence belongs to the Smg family.

The protein is Protein Smg of Shigella boydii serotype 18 (strain CDC 3083-94 / BS512).